Reading from the N-terminus, the 326-residue chain is MEKSITNSPVLSILSYCAASILMTVTNKYVLSGTSFNLNLALLAVQSIVCLTAISIGKSFGLCKFRSFNADEAKKWFPIALLLVVMIYTSSKALQFLSIPVYTIFKNLTIILIAYGEVLWFGGSVTSMALASFVLMVLSSVIAAWSDISGAIAVSGSATTTVTALNIGYFWMMSNCFASAAFVLYMRKRIKLTNFGDFDTTFYNNLLSIPVLLIASLLFEDWSPANLAVNFPPESRNLIFFSMVVSGLMSIGISYCSAWCVRVTSSTTYSMVGALNKLPLALSGIVFFGTPATFSSVSAIFVGFVAGIVYAVAQIQKKKAEAALPK.

The Cytoplasmic segment spans residues 1 to 4; it reads MEKS. A helical membrane pass occupies residues 5 to 25; that stretch reads ITNSPVLSILSYCAASILMTV. Residues 26-35 are Lumenal-facing; the sequence is TNKYVLSGTS. The chain crosses the membrane as a helical span at residues 36–56; it reads FNLNLALLAVQSIVCLTAISI. Topologically, residues 57–74 are cytoplasmic; sequence GKSFGLCKFRSFNADEAK. A helical transmembrane segment spans residues 75–97; the sequence is KWFPIALLLVVMIYTSSKALQFL. Residues 98 to 100 are Lumenal-facing; the sequence is SIP. The helical transmembrane segment at 101–123 threads the bilayer; sequence VYTIFKNLTIILIAYGEVLWFGG. Residues 124 to 129 are Cytoplasmic-facing; it reads SVTSMA. The helical transmembrane segment at 130 to 152 threads the bilayer; sequence LASFVLMVLSSVIAAWSDISGAI. At 153 to 163 the chain is on the lumenal side; sequence AVSGSATTTVT. A helical transmembrane segment spans residues 164–184; sequence ALNIGYFWMMSNCFASAAFVL. The Cytoplasmic segment spans residues 185-208; that stretch reads YMRKRIKLTNFGDFDTTFYNNLLS. The helical transmembrane segment at 209–229 threads the bilayer; sequence IPVLLIASLLFEDWSPANLAV. The Lumenal portion of the chain corresponds to 230–237; sequence NFPPESRN. The chain crosses the membrane as a helical span at residues 238-258; it reads LIFFSMVVSGLMSIGISYCSA. The Cytoplasmic segment spans residues 259-268; it reads WCVRVTSSTT. Residues 269 to 289 form a helical membrane-spanning segment; that stretch reads YSMVGALNKLPLALSGIVFFG. Over 290–291 the chain is Lumenal; sequence TP. The chain crosses the membrane as a helical span at residues 292–312; it reads ATFSSVSAIFVGFVAGIVYAV. The Cytoplasmic portion of the chain corresponds to 313–326; that stretch reads AQIQKKKAEAALPK.

The protein belongs to the TPT transporter family. SLC35D subfamily. Homooligomer.

The protein localises to the golgi apparatus membrane. It is found in the cytoplasmic vesicle membrane. Its subcellular location is the endoplasmic reticulum membrane. Involved in the import of GDP-mannose from the cytoplasm into the Golgi lumen. This Yarrowia lipolytica (strain CLIB 122 / E 150) (Yeast) protein is GDP-mannose transporter (VRG4).